Here is a 209-residue protein sequence, read N- to C-terminus: N-(5'-phosphoribosyl)anthranilate isomerase (209 aa).

It belongs to the TrpF family.

The catalysed reaction is N-(5-phospho-beta-D-ribosyl)anthranilate = 1-(2-carboxyphenylamino)-1-deoxy-D-ribulose 5-phosphate. The protein operates within amino-acid biosynthesis; L-tryptophan biosynthesis; L-tryptophan from chorismate: step 3/5. The polypeptide is N-(5'-phosphoribosyl)anthranilate isomerase (Staphylococcus carnosus (strain TM300)).